A 225-amino-acid chain; its full sequence is Probable manganese catalase (225 aa).

Glutamate 37 serves as a coordination point for Mn(2+). Ca(2+)-binding residues include aspartate 58 and aspartate 62. Glutamate 67, histidine 70, glutamate 138, and histidine 171 together coordinate Mn(2+). Serine 204 contacts Ca(2+). Positions 204-225 (STPGRYVQDPNPTEPSFSNPRR) are disordered. Positions 213–225 (PNPTEPSFSNPRR) are enriched in polar residues.

It belongs to the manganese catalase family. Requires Ca(2+) as cofactor. Mn(2+) serves as cofactor.

It carries out the reaction 2 H2O2 = O2 + 2 H2O. Its function is as follows. Catalyzes the decomposition of hydrogen peroxide into water and oxygen. In Clostridium acetobutylicum (strain ATCC 824 / DSM 792 / JCM 1419 / IAM 19013 / LMG 5710 / NBRC 13948 / NRRL B-527 / VKM B-1787 / 2291 / W), this protein is Probable manganese catalase.